A 177-amino-acid polypeptide reads, in one-letter code: Ribosome maturation factor RimM (177 aa).

The 74-residue stretch at 101-174 (EGEFHLLDLV…WLLLTPPPGL (74 aa)) folds into the PRC barrel domain.

This sequence belongs to the RimM family. Binds ribosomal protein uS19.

It localises to the cytoplasm. Its function is as follows. An accessory protein needed during the final step in the assembly of 30S ribosomal subunit, possibly for assembly of the head region. Essential for efficient processing of 16S rRNA. May be needed both before and after RbfA during the maturation of 16S rRNA. It has affinity for free ribosomal 30S subunits but not for 70S ribosomes. The protein is Ribosome maturation factor RimM of Synechococcus sp. (strain CC9605).